The primary structure comprises 370 residues: Cytochrome b (370 aa).

Transmembrane regions (helical) follow at residues 30-50 (FGSMLGMVLVFQIVTGTFLAF), 74-96 (WIFRIFHFNGASLFFIFLYLHIF), 109-129 (VWMSGLTIYLLVMMEAFMGYV), and 175-195 (FFVLHFLLPWAILFIVLGHLI). Positions 80 and 94 each coordinate heme b. Heme b is bound by residues H179 and H193. A ubiquinone is bound at residue H198. 4 helical membrane passes run 221–240 (YIGKDAYNIVVWLVFIVLSL), 284–304 (VLGVIALLMSIVTFYFFALVN), 316–336 (FLVFLFIISSVILSWLGQCMV), and 342–362 (VLSPLFSVIYFGLAYLLLGIF).

The protein belongs to the cytochrome b family. In terms of assembly, the main subunits of complex b-c1 are: cytochrome b, cytochrome c1 and the Rieske protein. It depends on heme b as a cofactor.

The protein localises to the mitochondrion inner membrane. Component of the ubiquinol-cytochrome c reductase complex (complex III or cytochrome b-c1 complex) that is part of the mitochondrial respiratory chain. The b-c1 complex mediates electron transfer from ubiquinol to cytochrome c. Contributes to the generation of a proton gradient across the mitochondrial membrane that is then used for ATP synthesis. The protein is Cytochrome b (ctb-1) of Caenorhabditis briggsae.